Consider the following 161-residue polypeptide: MTSIRIGNGYDIHQLVEGRPLILGGVQIEHSLGLKGHSDADVLTHAIMDALLGALSLGDIGHYFPPTDPKWAGADSLKLLEQVHQLILDRGWQIGNIDSVVVAERPKLKPHIEAMRDRISQVLNLSPELIGIKATTNEKLGPVGQEQGICSYAVALLTSDS.

2 residues coordinate a divalent metal cation: D11 and H13. 4-CDP-2-C-methyl-D-erythritol 2-phosphate-binding positions include D11–H13 and H37–S38. H45 lines the a divalent metal cation pocket. Residues D59–G61 and T135–E138 contribute to the 4-CDP-2-C-methyl-D-erythritol 2-phosphate site.

It belongs to the IspF family. Homotrimer. It depends on a divalent metal cation as a cofactor.

The enzyme catalyses 4-CDP-2-C-methyl-D-erythritol 2-phosphate = 2-C-methyl-D-erythritol 2,4-cyclic diphosphate + CMP. Its pathway is isoprenoid biosynthesis; isopentenyl diphosphate biosynthesis via DXP pathway; isopentenyl diphosphate from 1-deoxy-D-xylulose 5-phosphate: step 4/6. In terms of biological role, involved in the biosynthesis of isopentenyl diphosphate (IPP) and dimethylallyl diphosphate (DMAPP), two major building blocks of isoprenoid compounds. Catalyzes the conversion of 4-diphosphocytidyl-2-C-methyl-D-erythritol 2-phosphate (CDP-ME2P) to 2-C-methyl-D-erythritol 2,4-cyclodiphosphate (ME-CPP) with a corresponding release of cytidine 5-monophosphate (CMP). The polypeptide is 2-C-methyl-D-erythritol 2,4-cyclodiphosphate synthase (Acaryochloris marina (strain MBIC 11017)).